The primary structure comprises 481 residues: Cobyric acid synthase (481 aa).

Positions 244–431 (VLRVVIPVLP…LHGLFDAPEA (188 aa)) constitute a GATase cobBQ-type domain. Cys325 (nucleophile) is an active-site residue. The active site involves His423.

The protein belongs to the CobB/CobQ family. CobQ subfamily.

It participates in cofactor biosynthesis; adenosylcobalamin biosynthesis. Catalyzes amidations at positions B, D, E, and G on adenosylcobyrinic A,C-diamide. NH(2) groups are provided by glutamine, and one molecule of ATP is hydrogenolyzed for each amidation. This is Cobyric acid synthase from Ralstonia nicotianae (strain ATCC BAA-1114 / GMI1000) (Ralstonia solanacearum).